A 782-amino-acid polypeptide reads, in one-letter code: Homeotic protein proboscipedia (782 aa).

Disordered stretches follow at residues 1-23 (MQEV…ESPL), 153-195 (PQTP…VPEN), 251-336 (MKHK…GISS), 358-380 (SSVS…KDDG), 439-493 (IATP…QQQP), and 547-586 (YYNY…ADFE). Positions 164–169 (EYPWMK) match the Antp-type hexapeptide motif. Residues 198-257 (PRRLRTAYTNTQLLELEKEFHFNKYLCRPRRIEIAASLDLTERQVKVWFQNRRMKHKRQT) constitute a DNA-binding region (homeobox). The segment covering 308-321 (NNNTPSATNNNPSA) has biased composition (low complexity). Positions 322 to 336 (GNLTPNSSLETGISS) are enriched in polar residues. Gly residues predominate over residues 452–463 (NGSGGGPAGGYF). A compositionally biased stretch (low complexity) spans 464–493 (PGYYPSPKQQQQVQQQQLHPQQQQLPQQQP). Over residues 563-580 (QQHHHHAQHHQQQQHHQN) the composition is skewed to basic residues.

The protein belongs to the Antp homeobox family. Proboscipedia subfamily.

It localises to the nucleus. In terms of biological role, sequence-specific transcription factor which is part of a developmental regulatory system that provides cells with specific positional identities on the anterior-posterior axis. Controls development of mouthparts, and labial and maxillary palps. The protein is Homeotic protein proboscipedia (pb) of Drosophila melanogaster (Fruit fly).